The sequence spans 85 residues: UPF0386 protein VF_0869 (85 aa).

Belongs to the UPF0386 family.

The polypeptide is UPF0386 protein VF_0869 (Aliivibrio fischeri (strain ATCC 700601 / ES114) (Vibrio fischeri)).